Consider the following 111-residue polypeptide: MFKATARYIRVQPRKARLAAGLMRNRSVVEAQQQLSFSQMKAGRCLKKVLDGAIANAESNENIKRENLCVLEVRVDVGPMFKRMKSKSRGGRAPILKRTSHLTVIVGERGQ.

It belongs to the universal ribosomal protein uL22 family. Part of the 50S ribosomal subunit.

Functionally, this protein binds specifically to 23S rRNA; its binding is stimulated by other ribosomal proteins, e.g. L4, L17, and L20. It is important during the early stages of 50S assembly. It makes multiple contacts with different domains of the 23S rRNA in the assembled 50S subunit and ribosome. The globular domain of the protein is located near the polypeptide exit tunnel on the outside of the subunit, while an extended beta-hairpin is found that lines the wall of the exit tunnel in the center of the 70S ribosome. The polypeptide is Large ribosomal subunit protein uL22 (Chlamydia trachomatis serovar A (strain ATCC VR-571B / DSM 19440 / HAR-13)).